Here is a 252-residue protein sequence, read N- to C-terminus: Ubiquinone/menaquinone biosynthesis C-methyltransferase UbiE (252 aa).

Residues T75, D96, and 123–124 (NA) contribute to the S-adenosyl-L-methionine site.

It belongs to the class I-like SAM-binding methyltransferase superfamily. MenG/UbiE family.

It carries out the reaction a 2-demethylmenaquinol + S-adenosyl-L-methionine = a menaquinol + S-adenosyl-L-homocysteine + H(+). It catalyses the reaction a 2-methoxy-6-(all-trans-polyprenyl)benzene-1,4-diol + S-adenosyl-L-methionine = a 5-methoxy-2-methyl-3-(all-trans-polyprenyl)benzene-1,4-diol + S-adenosyl-L-homocysteine + H(+). The protein operates within quinol/quinone metabolism; menaquinone biosynthesis; menaquinol from 1,4-dihydroxy-2-naphthoate: step 2/2. It functions in the pathway cofactor biosynthesis; ubiquinone biosynthesis. Functionally, methyltransferase required for the conversion of demethylmenaquinol (DMKH2) to menaquinol (MKH2) and the conversion of 2-polyprenyl-6-methoxy-1,4-benzoquinol (DDMQH2) to 2-polyprenyl-3-methyl-6-methoxy-1,4-benzoquinol (DMQH2). The polypeptide is Ubiquinone/menaquinone biosynthesis C-methyltransferase UbiE (Methylobacterium nodulans (strain LMG 21967 / CNCM I-2342 / ORS 2060)).